A 412-amino-acid polypeptide reads, in one-letter code: Glucose/galactose transporter (412 aa).

11 helical membrane passes run 21 to 41, 62 to 82, 90 to 110, 113 to 133, 158 to 178, 192 to 212, 239 to 259, 310 to 330, 331 to 351, 363 to 383, and 388 to 408; these read YGFA…ITCL, LIQF…GQLV, GIVV…PAAS, VYAL…ILQV, FNSL…LSAA, FPYL…AILK, LGAI…SFLV, AFVA…IAMW, SVLA…SLAL, GILC…GALA, and IHLA…YGLI.

Belongs to the major facilitator superfamily. FHS transporter (TC 2.A.1.7) family.

Its subcellular location is the cell inner membrane. Intake of glucose and galactose. In Brucella abortus (strain 2308), this protein is Glucose/galactose transporter (gluP).